Here is an 89-residue protein sequence, read N- to C-terminus: Sec translocon accessory complex subunit YrbF (89 aa).

A helical membrane pass occupies residues 4 to 24 (GTLGTLVPIILMFAVLYFLLI).

This sequence belongs to the YajC family. Part of the SecDF-YidC-YajC translocase complex. The SecDF-YidC-YajC translocase forms a supercomplex with SecYEG, called the holo-translocon (HTL).

It is found in the cell membrane. Its function is as follows. The SecYEG-SecDF-YajC-YidC holo-translocon (HTL) protein secretase/insertase is a supercomplex required for protein secretion, insertion of proteins into membranes, and assembly of membrane protein complexes. While the SecYEG complex is essential for assembly of a number of proteins and complexes, the SecDF-YajC-YidC subcomplex facilitates these functions. In Bacillus subtilis (strain 168), this protein is Sec translocon accessory complex subunit YrbF (yrbF).